We begin with the raw amino-acid sequence, 539 residues long: Neutral amino acid transporter B(0) (539 aa).

Met1 is modified (N-acetylmethionine). Residues 1–52 (MVADPPKGDPKGYAAAEPTANGVSMLVPIEDVGSLKGGRCGSGDQVRRCLRA) lie on the Cytoplasmic side of the membrane. A helical membrane pass occupies residues 53 to 82 (NLLVLLTVVAVVAGVALGLGVSGAGGAFAL). Residues 83-95 (GPARLEAFSFPGE) are Extracellular-facing. Residues 96-117 (LLLRLLKMIILPLVVCSLIGGA) traverse the membrane as a helical segment. Residues 118–131 (ASLDPSALGRLGAW) are Cytoplasmic-facing. A helical transmembrane segment spans residues 132–154 (ALLFFLVTTLLASALGVGLALAL). Over 155-223 (QPGAAFAAIN…GTLVKVPTGG (69 aa)) the chain is Extracellular. 2 N-linked (GlcNAc...) asparagine glycosylation sites follow: Asn164 and Asn213. A helical transmembrane segment spans residues 224 to 247 (EVEGMNILGLVVFAIIFGVALRKL). Residues 248–256 (GPEGELLIR) are Cytoplasmic-facing. The chain crosses the membrane as a helical span at residues 257–284 (FFNSFNDATMVLVSWIMWYAPVGILFLV). At 285 to 305 (AGKIVEMENVGLLFASLGKYI) the chain is on the extracellular side. Residues 306-327 (LCCLLGHAIHGLLTLPLIYFLF) form a helical membrane-spanning segment. Over 328-332 (ARKNP) the chain is Cytoplasmic. The discontinuously helical intramembrane region spans 333 to 363 (YRFLWGIMTPLATAFGTSSSSATLPLMMKCV). At 364–372 (EEKNGVARH) the chain is on the cytoplasmic side. Residues 373–399 (ISRFILPIGATVNMDGAALFQCVAAVF) traverse the membrane as a helical segment. Positions 381, 383, and 385 each coordinate Na(+). Residues 400 to 412 (IAQLNHRSLDFVK) are Extracellular-facing. Residues 413–446 (IITILVTATASSVGAAGIPSGGVLTLAIILEAVN) constitute an intramembrane region (discontinuously helical). Over 447–459 (LPVHDISLILAVD) the chain is Extracellular. Residues 460-481 (WLVDRSCTVLNVEGDAFGAGLL) form a helical membrane-spanning segment. Asn470 and Asp474 together coordinate Na(+). Residues 482-539 (QSYLDRTENCNSVPELIQVKSEMPLAALPVPGEEGNPLLKGCPGPAGDADTCEKESVM) are Cytoplasmic-facing. A phosphoserine mark is found at Ser493, Ser502, and Ser537. A disordered region spans residues 518 to 539 (PLLKGCPGPAGDADTCEKESVM).

The protein belongs to the dicarboxylate/amino acid:cation symporter (DAACS) (TC 2.A.23) family. SLC1A5 subfamily. As to quaternary structure, homotrimer.

The protein resides in the cell membrane. The protein localises to the melanosome. The enzyme catalyses L-glutamine(out) + L-serine(in) + Na(+)(out) = L-glutamine(in) + L-serine(out) + Na(+)(in). It catalyses the reaction L-glutamine(in) + L-serine(out) + Na(+)(out) = L-glutamine(out) + L-serine(in) + Na(+)(in). It carries out the reaction L-threonine(in) + L-glutamine(out) + Na(+)(out) = L-threonine(out) + L-glutamine(in) + Na(+)(in). The catalysed reaction is L-threonine(out) + L-glutamine(in) + Na(+)(out) = L-threonine(in) + L-glutamine(out) + Na(+)(in). The enzyme catalyses L-asparagine(in) + L-glutamine(out) + Na(+)(out) = L-asparagine(out) + L-glutamine(in) + Na(+)(in). It catalyses the reaction L-asparagine(out) + L-glutamine(in) + Na(+)(out) = L-asparagine(in) + L-glutamine(out) + Na(+)(in). It carries out the reaction L-glutamine(in) + L-alanine(out) + Na(+)(out) = L-glutamine(out) + L-alanine(in) + Na(+)(in). The catalysed reaction is L-valine(out) + L-glutamine(in) + Na(+)(out) = L-valine(in) + L-glutamine(out) + Na(+)(in). The enzyme catalyses L-glutamine(in) + L-methionine(out) + Na(+)(out) = L-glutamine(out) + L-methionine(in) + Na(+)(in). It catalyses the reaction L-glutamine(in) + L-glutamate(out) + Na(+)(out) + H(+)(out) = L-glutamine(out) + L-glutamate(in) + Na(+)(in) + H(+)(in). It carries out the reaction D-serine(in) + L-glutamine(out) + Na(+)(out) = D-serine(out) + L-glutamine(in) + Na(+)(in). The catalysed reaction is D-serine(in) + L-alanine(out) + Na(+)(out) = D-serine(out) + L-alanine(in) + Na(+)(in). The enzyme catalyses nitrate(in) = nitrate(out). It catalyses the reaction iodide(out) = iodide(in). It carries out the reaction thiocyanate(in) = thiocyanate(out). Its function is as follows. Sodium-coupled antiporter of neutral amino acids. In a tri-substrate transport cycle, exchanges neutral amino acids between the extracellular and intracellular compartments, coupled to the inward cotransport of at least one sodium ion. The preferred substrate is the essential amino acid L-glutamine, a precursor for biosynthesis of proteins, nucleotides and amine sugars as well as an alternative fuel for mitochondrial oxidative phosphorylation. Exchanges L-glutamine with other neutral amino acids such as L-serine, L-threonine and L-asparagine in a bidirectional way. Provides L-glutamine to proliferating stem and activated cells driving the metabolic switch toward cell differentiation. The transport cycle is usually pH-independent, with the exception of L-glutamate. Transports extracellular L-glutamate coupled to the cotransport of one proton and one sodium ion in exchange for intracellular L-glutamine counter-ion. May provide for L-glutamate uptake in glial cells regulating glutamine/glutamate cycle in the nervous system. Can transport D-amino acids. Mediates D-serine release from the retinal glia potentially affecting NMDA receptor function in retinal neurons. Displays sodium- and amino acid-dependent but uncoupled channel-like anion conductance with a preference SCN(-) &gt;&gt; NO3(-) &gt; I(-) &gt; Cl(-). Through binding of the fusogenic protein syncytin-1/ERVW-1 may mediate trophoblasts syncytialization, the spontaneous fusion of their plasma membranes, an essential process in placental development. This Bos taurus (Bovine) protein is Neutral amino acid transporter B(0) (SLC1A5).